Consider the following 504-residue polypeptide: UDP-N-acetylglucosamine--peptide N-acetylglucosaminyltransferase GtfA subunit (504 aa).

Position 16 to 19 (16 to 19 (GVEY)) interacts with UDP. His-243 serves as a coordination point for N-acetyl-D-glucosamine. 385 to 386 (HK) is a binding site for UDP. Residue 405 to 408 (EGFG) participates in N-acetyl-D-glucosamine binding.

This sequence belongs to the glycosyltransferase group 1 family. Glycosyltransferase 4 subfamily. Interacts with stabilizing protein GtfB (Gtf1), probably via the N-terminus of this protein; probably forms a heterotetramer with 2 subunits each of GtfA and GtfB. Part of the accessory SecA2/SecY2 protein translocation apparatus.

The protein resides in the cytoplasm. The protein localises to the cell membrane. The enzyme catalyses L-seryl-[protein] + UDP-N-acetyl-alpha-D-glucosamine = 3-O-[N-acetyl-alpha-D-glucosaminyl]-L-seryl-[protein] + UDP + H(+). It participates in protein modification; protein glycosylation. Functionally, required for polymorphic O-glycosylation of serine-rich repeat protein Fap1. Catalyzes the first step in glycosylation by transferring N-acetylglucosamine from UDP-GlcNAc to serine residues in Fap1. Part of the accessory SecA2/SecY2 system specifically required to export Fap1, a serine-rich fimbrial adhesin encoded upstream in the same operon. The GtfA-GtfB (Gtf1-Gtf2 in this bacteria) complex adds GlcNAc from UDP-GlcNAc to Fap1, attaching the first sugar residue. Cannot use not UDP-Glc as substrate. This subunit has very low glycosyltransferase activity; the GtfB stabilizing protein enhances membrane association, protease resistance and glycosyltransferase activity. The chain is UDP-N-acetylglucosamine--peptide N-acetylglucosaminyltransferase GtfA subunit from Streptococcus parasanguinis.